Consider the following 445-residue polypeptide: Phosphoglucosamine mutase (445 aa).

The active-site Phosphoserine intermediate is the S102. Residues S102, D241, D243, and D245 each contribute to the Mg(2+) site. The residue at position 102 (S102) is a Phosphoserine.

The protein belongs to the phosphohexose mutase family. It depends on Mg(2+) as a cofactor. Activated by phosphorylation.

It catalyses the reaction alpha-D-glucosamine 1-phosphate = D-glucosamine 6-phosphate. Its function is as follows. Catalyzes the conversion of glucosamine-6-phosphate to glucosamine-1-phosphate. This chain is Phosphoglucosamine mutase, found in Salmonella dublin (strain CT_02021853).